Consider the following 385-residue polypeptide: DNA replication and repair protein RecF (385 aa).

30–37 (GPNGFGKT) is a binding site for ATP.

The protein belongs to the RecF family.

Its subcellular location is the cytoplasm. The RecF protein is involved in DNA metabolism; it is required for DNA replication and normal SOS inducibility. RecF binds preferentially to single-stranded, linear DNA. It also seems to bind ATP. The sequence is that of DNA replication and repair protein RecF from Mycobacterium marinum (strain ATCC BAA-535 / M).